Here is a 252-residue protein sequence, read N- to C-terminus: Uridylate kinase (252 aa).

23–26 (KLSG) provides a ligand contact to ATP. A UMP-binding site is contributed by Gly-65. ATP-binding residues include Gly-66 and Arg-70. Residues Asp-85 and 146 to 153 (LGAPFFST) each bind UMP. ATP-binding residues include Thr-173, Gln-174, Tyr-179, and Asp-182.

The protein belongs to the UMP kinase family. In terms of assembly, homohexamer.

It is found in the cytoplasm. The enzyme catalyses UMP + ATP = UDP + ADP. Its pathway is pyrimidine metabolism; CTP biosynthesis via de novo pathway; UDP from UMP (UMPK route): step 1/1. With respect to regulation, inhibited by UTP. Catalyzes the reversible phosphorylation of UMP to UDP. This is Uridylate kinase from Thermobifida fusca (strain YX).